Reading from the N-terminus, the 648-residue chain is Chaperone protein HtpG (648 aa).

Positions 1–349 are a; substrate-binding; that stretch reads MTTEHAAGAQ…SSDLPLNVSR (349 aa). The interval 350 to 570 is b; that stretch reads EILQESKDID…EHDVGMNLAR (221 aa). Positions 571-648 are c; the sequence is ILKAAGQQAP…MAMGGSAGTD (78 aa).

This sequence belongs to the heat shock protein 90 family. In terms of assembly, homodimer.

It localises to the cytoplasm. Molecular chaperone. Has ATPase activity. This is Chaperone protein HtpG from Aromatoleum aromaticum (strain DSM 19018 / LMG 30748 / EbN1) (Azoarcus sp. (strain EbN1)).